We begin with the raw amino-acid sequence, 409 residues long: Pyruvate dehydrogenase E1 component subunit alpha, mitochondrial (409 aa).

Position 6 is a phosphothreonine (Thr6). Residues His109, Tyr135, Arg136, Ala174, Gly182, Val184, Asp213, Gly214, Ala215, Asn242, and Tyr244 each coordinate pyruvate. Thiamine diphosphate contacts are provided by Tyr135 and Arg136. Residues Gly182, Val184, Asp213, Gly214, Ala215, and Asn242 each contribute to the thiamine diphosphate site. Position 213 (Asp213) interacts with Mg(2+). Mg(2+) is bound by residues Asn242 and Tyr244. Residue Tyr306 is modified to Phosphotyrosine. His309 is a binding site for thiamine diphosphate. Phosphoserine is present on residues Ser310 and Ser312.

As to quaternary structure, tetramer of 2 alpha and 2 beta subunits. Requires thiamine diphosphate as cofactor. The cofactor is Mg(2+).

The protein resides in the mitochondrion matrix. The enzyme catalyses N(6)-[(R)-lipoyl]-L-lysyl-[protein] + pyruvate + H(+) = N(6)-[(R)-S(8)-acetyldihydrolipoyl]-L-lysyl-[protein] + CO2. Its activity is regulated as follows. E1 activity is regulated by phosphorylation (inactivation) and dephosphorylation (activation) of the alpha subunit. The pyruvate dehydrogenase complex catalyzes the overall conversion of pyruvate to acetyl-CoA and CO(2). It contains multiple copies of three enzymatic components: pyruvate dehydrogenase (E1), dihydrolipoamide acetyltransferase (E2) and lipoamide dehydrogenase (E3). This chain is Pyruvate dehydrogenase E1 component subunit alpha, mitochondrial (pda1), found in Schizosaccharomyces pombe (strain 972 / ATCC 24843) (Fission yeast).